The sequence spans 240 residues: T-cell antigen CD7 (240 aa).

Residues 1–25 (MAGPPRLLLLPLLLALARGLPGALA) form the signal peptide. Positions 26–130 (AQEVQQSPHC…NVYGSGTLVL (105 aa)) constitute an Ig-like domain. Over 26–180 (AQEVQQSPHC…PDPPAASALP (155 aa)) the chain is Extracellular. Disulfide bonds link Cys35–Cys142 and Cys48–Cys114. N-linked (GlcNAc...) asparagine glycosylation is found at Asn45 and Asn96. The interval 140–172 (HRCSDAPPRASALPAPPTGSALPDPQTASALPD) is disordered. 4 tandem repeats follow at residues 145–153 (APPRASALP), 154–162 (APPTGSALP), 163–171 (DPQTASALP), and 172–180 (DPPAASALP). Residues 145 to 180 (APPRASALPAPPTGSALPDPQTASALPDPPAASALP) form a 4 X 9 AA tandem repeats, potential spacer function region. Residues 181-201 (AALAVISFLLGLGLGVACVLA) form a helical membrane-spanning segment. Residue Cys198 is the site of S-palmitoyl cysteine attachment. Over 202–240 (RTQIKKLCSWRDKNSAACVVYEDMSHSRCNTLSSPNQYQ) the chain is Cytoplasmic.

As to quaternary structure, interacts with SECTM1. Expressed on T-cells and natural killer (NK) cells and their precursors.

The protein resides in the membrane. Transmembrane glycoprotein expressed by T-cells and natural killer (NK) cells and their precursors. Plays a costimulatory role in T-cell activation upon binding to its ligand K12/SECTM1. In turn, mediates the production of cytokines such as IL-2. On resting NK-cells, CD7 activation results in a significant induction of interferon-gamma levels. In Homo sapiens (Human), this protein is T-cell antigen CD7 (CD7).